A 444-amino-acid chain; its full sequence is Glutamyl-tRNA reductase (444 aa).

Substrate is bound by residues 49 to 52 (TCNR), serine 109, 114 to 116 (ETQ), and glutamine 120. Catalysis depends on cysteine 50, which acts as the Nucleophile. 189 to 194 (GAGKMS) contributes to the NADP(+) binding site. The disordered stretch occupies residues 425-444 (KPKKQPAPAGIKEPVLAKKG).

It belongs to the glutamyl-tRNA reductase family. In terms of assembly, homodimer.

The enzyme catalyses (S)-4-amino-5-oxopentanoate + tRNA(Glu) + NADP(+) = L-glutamyl-tRNA(Glu) + NADPH + H(+). It participates in porphyrin-containing compound metabolism; protoporphyrin-IX biosynthesis; 5-aminolevulinate from L-glutamyl-tRNA(Glu): step 1/2. Its function is as follows. Catalyzes the NADPH-dependent reduction of glutamyl-tRNA(Glu) to glutamate 1-semialdehyde (GSA). The sequence is that of Glutamyl-tRNA reductase from Pelotomaculum thermopropionicum (strain DSM 13744 / JCM 10971 / SI).